The following is a 131-amino-acid chain: D-ribose pyranase (131 aa).

The active-site Proton donor is the His20. Substrate contacts are provided by residues Asp28, His98, and 120–122; that span reads YAN.

This sequence belongs to the RbsD / FucU family. RbsD subfamily. Homodecamer.

The protein resides in the cytoplasm. The enzyme catalyses beta-D-ribopyranose = beta-D-ribofuranose. It participates in carbohydrate metabolism; D-ribose degradation; D-ribose 5-phosphate from beta-D-ribopyranose: step 1/2. Functionally, catalyzes the interconversion of beta-pyran and beta-furan forms of D-ribose. The chain is D-ribose pyranase from Bacillus velezensis (strain DSM 23117 / BGSC 10A6 / LMG 26770 / FZB42) (Bacillus amyloliquefaciens subsp. plantarum).